The following is a 431-amino-acid chain: NADH-quinone oxidoreductase subunit D 2 (431 aa).

A disordered region spans residues 1 to 37 (MSEAKGVGGIDPRATPGSAGAGERPPMGTLSPRAGEG).

It belongs to the complex I 49 kDa subunit family. As to quaternary structure, NDH-1 is composed of 14 different subunits. Subunits NuoB, C, D, E, F, and G constitute the peripheral sector of the complex.

It is found in the cell inner membrane. The enzyme catalyses a quinone + NADH + 5 H(+)(in) = a quinol + NAD(+) + 4 H(+)(out). NDH-1 shuttles electrons from NADH, via FMN and iron-sulfur (Fe-S) centers, to quinones in the respiratory chain. The immediate electron acceptor for the enzyme in this species is believed to be ubiquinone. Couples the redox reaction to proton translocation (for every two electrons transferred, four hydrogen ions are translocated across the cytoplasmic membrane), and thus conserves the redox energy in a proton gradient. The chain is NADH-quinone oxidoreductase subunit D 2 from Anaeromyxobacter sp. (strain K).